A 372-amino-acid polypeptide reads, in one-letter code: NAD(P)H-quinone oxidoreductase subunit 1 (372 aa).

Helical transmembrane passes span 27-47 (AVWM…GVLI), 97-117 (ALFT…YLIV), 128-148 (LGIG…GLLM), 166-186 (AAQS…IAMM), 204-224 (ILGW…IAAL), 254-274 (FALF…MVAI), 308-328 (AVGI…AILL), and 351-371 (VGLV…IAFG).

Belongs to the complex I subunit 1 family. As to quaternary structure, NDH-1 is composed of at least 11 different subunits.

The protein localises to the cellular thylakoid membrane. The enzyme catalyses a plastoquinone + NADH + (n+1) H(+)(in) = a plastoquinol + NAD(+) + n H(+)(out). It carries out the reaction a plastoquinone + NADPH + (n+1) H(+)(in) = a plastoquinol + NADP(+) + n H(+)(out). NDH-1 shuttles electrons from an unknown electron donor, via FMN and iron-sulfur (Fe-S) centers, to quinones in the respiratory and/or the photosynthetic chain. The immediate electron acceptor for the enzyme in this species is believed to be plastoquinone. Couples the redox reaction to proton translocation, and thus conserves the redox energy in a proton gradient. In Cyanothece sp. (strain PCC 7425 / ATCC 29141), this protein is NAD(P)H-quinone oxidoreductase subunit 1.